The chain runs to 245 residues: Venom nerve growth factor 1 (245 aa).

Positions 1–18 (MSMLCYTLIIAFLIGIWA) are cleaved as a signal peptide. Residues 19 to 125 (APKSEDNVPL…ALNRNIRAKR (107 aa)) constitute a propeptide that is removed on maturation. Over residues 47 to 66 (GLKTSRNTDQRHPAPKKAED) the composition is skewed to basic and acidic residues. The tract at residues 47 to 69 (GLKTSRNTDQRHPAPKKAEDQEL) is disordered. Cystine bridges form between Cys139-Cys206, Cys182-Cys234, and Cys194-Cys236. N-linked (GlcNAc...) asparagine glycosylation is found at Asn148 and Asn151.

The protein belongs to the NGF-beta family. In terms of assembly, homodimer; non-covalently linked. Expressed by the venom gland.

The protein resides in the secreted. In terms of biological role, nerve growth factor is important for the development and maintenance of the sympathetic and sensory nervous systems. It stimulates division and differentiation of sympathetic and embryonic sensory neurons as well as basal forebrain cholinergic neurons in the brain. Its relevance in the snake venom is not clear. However, it has been shown to inhibit metalloproteinase-dependent proteolysis of platelet glycoprotein Ib alpha, suggesting a metalloproteinase inhibition to prevent metalloprotease autodigestion and/or protection against prey proteases. Binds a lipid between the two protein chains in the homodimer. The lipid-bound form promotes histamine relase from mouse mast cells, contrary to the lipid-free form. In Tropidechis carinatus (Australian rough-scaled snake), this protein is Venom nerve growth factor 1.